The chain runs to 191 residues: Calcium-binding protein CML42 (191 aa).

3 EF-hand domains span residues 25–60 (LNAL…LGLN), 116–151 (ENES…LGLP), and 154–189 (GEME…VVIP). Aspartate 38, asparagine 40, aspartate 42, glutamate 49, aspartate 129, asparagine 131, aspartate 133, glutamate 140, aspartate 167, asparagine 169, aspartate 171, arginine 173, and glutamate 178 together coordinate Ca(2+).

Interacts with KIC. Expressed in seedling shoots, roots, rosette leaves and flowers. Expressed in the leaf trichome support cells.

Functionally, probable calcium sensor that binds calcium in vitro. Involved in the regulation of trichome branching. In Arabidopsis thaliana (Mouse-ear cress), this protein is Calcium-binding protein CML42 (CML42).